The following is a 248-amino-acid chain: Ubiquinone/menaquinone biosynthesis C-methyltransferase UbiE (248 aa).

Residues Ser-68 and Asp-92 each contribute to the S-adenosyl-L-methionine site.

Belongs to the class I-like SAM-binding methyltransferase superfamily. MenG/UbiE family.

The catalysed reaction is a 2-demethylmenaquinol + S-adenosyl-L-methionine = a menaquinol + S-adenosyl-L-homocysteine + H(+). It carries out the reaction a 2-methoxy-6-(all-trans-polyprenyl)benzene-1,4-diol + S-adenosyl-L-methionine = a 5-methoxy-2-methyl-3-(all-trans-polyprenyl)benzene-1,4-diol + S-adenosyl-L-homocysteine + H(+). It functions in the pathway quinol/quinone metabolism; menaquinone biosynthesis; menaquinol from 1,4-dihydroxy-2-naphthoate: step 2/2. Its pathway is cofactor biosynthesis; ubiquinone biosynthesis. In terms of biological role, methyltransferase required for the conversion of demethylmenaquinol (DMKH2) to menaquinol (MKH2) and the conversion of 2-polyprenyl-6-methoxy-1,4-benzoquinol (DDMQH2) to 2-polyprenyl-3-methyl-6-methoxy-1,4-benzoquinol (DMQH2). The polypeptide is Ubiquinone/menaquinone biosynthesis C-methyltransferase UbiE (Rickettsia felis (strain ATCC VR-1525 / URRWXCal2) (Rickettsia azadi)).